The sequence spans 195 residues: MPPRPRFDRRAPVRELPNINERIKYPQLRVVDSDGKQLGVIDRIKALEIANQRELDLVLVSEKANPPVCRIMDYGKYKFEQEKKAKEARKKSHQTEVKEVKMRYKIDKHDYDVRIGQAVRFLKAGDKVKCTVIFRGREIQHSNLAETLLLRMANDLEEQSEVQQRPKREGRNMIMFLSPRKTPLIKKEEDAKENN.

Residues 158 to 195 (EQSEVQQRPKREGRNMIMFLSPRKTPLIKKEEDAKENN) form a disordered region. Residues 185–195 (IKKEEDAKENN) are compositionally biased toward basic and acidic residues.

This sequence belongs to the IF-3 family. In terms of assembly, monomer.

The protein resides in the cytoplasm. IF-3 binds to the 30S ribosomal subunit and shifts the equilibrium between 70S ribosomes and their 50S and 30S subunits in favor of the free subunits, thus enhancing the availability of 30S subunits on which protein synthesis initiation begins. The sequence is that of Translation initiation factor IF-3 from Prochlorococcus marinus (strain MIT 9515).